We begin with the raw amino-acid sequence, 23 residues long: Conotoxin as25a (23 aa).

Proline 4 is modified (4-hydroxyproline; partial). Proline 23 bears the 4-hydroxyproline; partial; alternate mark. Proline 23 carries the proline amide; alternate modification.

The name as25b given in PubMed:23474143 corresponds to the hydroxylated peptide. The amidation of the C-terminus of this hydroxylated peptide is not directly confirmed. In terms of processing, contains 3 disulfide bonds. As to expression, expressed by the venom duct.

The protein localises to the secreted. Upon intracranial injection in mice, as25a (the toxin without the two 4-hydroxyprolines) provokes paralysis of the hind limbs and death with a dose of 240 pmol. The polypeptide is Conotoxin as25a (Conus cancellatus (Cancellate cone)).